Here is a 200-residue protein sequence, read N- to C-terminus: dITP/XTP pyrophosphatase (200 aa).

7–12 contributes to the substrate binding site; it reads TSNKHK. Positions 38 and 73 each coordinate Mg(2+). The active-site Proton acceptor is the Asp73. Residues Ser74, 154 to 157, Lys177, and 182 to 183 contribute to the substrate site; these read FGYD and HR.

The protein belongs to the HAM1 NTPase family. As to quaternary structure, homodimer. It depends on Mg(2+) as a cofactor.

The enzyme catalyses XTP + H2O = XMP + diphosphate + H(+). It catalyses the reaction dITP + H2O = dIMP + diphosphate + H(+). It carries out the reaction ITP + H2O = IMP + diphosphate + H(+). Pyrophosphatase that catalyzes the hydrolysis of nucleoside triphosphates to their monophosphate derivatives, with a high preference for the non-canonical purine nucleotides XTP (xanthosine triphosphate), dITP (deoxyinosine triphosphate) and ITP. Seems to function as a house-cleaning enzyme that removes non-canonical purine nucleotides from the nucleotide pool, thus preventing their incorporation into DNA/RNA and avoiding chromosomal lesions. The sequence is that of dITP/XTP pyrophosphatase from Campylobacter jejuni subsp. doylei (strain ATCC BAA-1458 / RM4099 / 269.97).